Reading from the N-terminus, the 276-residue chain is Secreted LysM effector LysM10 (276 aa).

Positions 1 to 22 (MLLSLVKFGILSVFLLAQEAVA) are cleaved as a signal peptide. Residues Asn-27, Asn-104, and Asn-140 are each glycosylated (N-linked (GlcNAc...) asparagine). Residues 219–264 (KTYIAKEDDTCKSISEAQSISTDRLVEVNHLDYSCSSLTSGTALCI) enclose the LysM domain. Asn-267 carries an N-linked (GlcNAc...) asparagine glycan.

This sequence belongs to the secreted LysM effector family.

The protein resides in the secreted. Secreted LysM effector that might have a role in sequestration of chitin oligosaccharides (breakdown products of fungal cell walls that are released during invasion and act as triggers of host immunity) to dampen host defense. The sequence is that of Secreted LysM effector LysM10 from Penicillium expansum (Blue mold rot fungus).